The sequence spans 90 residues: uncharacterized protein (90 aa).

This is an uncharacterized protein from Escherichia coli (Bacteriophage T3).